We begin with the raw amino-acid sequence, 163 residues long: Transcription elongation factor GreA (163 aa).

The stretch at 49-80 forms a coiled coil; the sequence is ENAEYDAARDRQSEVERRILELERILENAEII.

Belongs to the GreA/GreB family.

Necessary for efficient RNA polymerase transcription elongation past template-encoded arresting sites. The arresting sites in DNA have the property of trapping a certain fraction of elongating RNA polymerases that pass through, resulting in locked ternary complexes. Cleavage of the nascent transcript by cleavage factors such as GreA or GreB allows the resumption of elongation from the new 3'terminus. GreA releases sequences of 2 to 3 nucleotides. This Mycoplasmopsis agalactiae (strain NCTC 10123 / CIP 59.7 / PG2) (Mycoplasma agalactiae) protein is Transcription elongation factor GreA.